Here is a 333-residue protein sequence, read N- to C-terminus: Glycerol-3-phosphate dehydrogenase [NAD(P)+] (333 aa).

Residues Trp12, Lys33, and Lys105 each contribute to the NADPH site. Lys105, Gly136, and Ser138 together coordinate sn-glycerol 3-phosphate. Ala140 lines the NADPH pocket. 5 residues coordinate sn-glycerol 3-phosphate: Lys191, Asp244, Ser254, Arg255, and Asn256. Lys191 serves as the catalytic Proton acceptor. Arg255 contributes to the NADPH binding site. Val279 and Glu281 together coordinate NADPH.

It belongs to the NAD-dependent glycerol-3-phosphate dehydrogenase family.

It localises to the cytoplasm. It carries out the reaction sn-glycerol 3-phosphate + NAD(+) = dihydroxyacetone phosphate + NADH + H(+). The catalysed reaction is sn-glycerol 3-phosphate + NADP(+) = dihydroxyacetone phosphate + NADPH + H(+). It functions in the pathway membrane lipid metabolism; glycerophospholipid metabolism. Functionally, catalyzes the reduction of the glycolytic intermediate dihydroxyacetone phosphate (DHAP) to sn-glycerol 3-phosphate (G3P), the key precursor for phospholipid synthesis. The sequence is that of Glycerol-3-phosphate dehydrogenase [NAD(P)+] from Protochlamydia amoebophila (strain UWE25).